The primary structure comprises 178 residues: Large ribosomal subunit protein uL6 (178 aa).

It belongs to the universal ribosomal protein uL6 family. As to quaternary structure, part of the 50S ribosomal subunit.

In terms of biological role, this protein binds to the 23S rRNA, and is important in its secondary structure. It is located near the subunit interface in the base of the L7/L12 stalk, and near the tRNA binding site of the peptidyltransferase center. This Staphylococcus carnosus (strain TM300) protein is Large ribosomal subunit protein uL6.